The sequence spans 429 residues: MQNYIKSEKAFKEAKKVLPGGVNSPVRAFNSVDASPVFMDHGKGAYITDVDGNEYIDYVLSWGPLILGHADPSVVNAITNSAMKGTSFGTPTEIETELAKLVIERVPSIEIVRMVSSGTEATMSAIRLARGYTKREKILKFEGSYHGHGDSLLIKAGSGVATLGLPDSPGVTKGLAADTITVPYNDVEGAKLAFEKFGEEIAAVIVEPVAGNMGVVPPIDGFLEGLRELTTEYGALLIFDEVMTGFRVDYYSAQGYYVVTPDITCLGKVIGGGLPVGAYGGKKEIMEQIAPAGSIYQAGTLSGNPLAMNAGFETVRQLTPQHYDVFRSLIKRMEEGLTEISNRHEVPLSINKAGSMFGFFFTDQKVTNFDTAKTSDLEFFRNYYREMLAQGIFLPPSQFEGVFISTMHTEKEIDATLEAFDVTCKMLRG.

Lys-268 is subject to N6-(pyridoxal phosphate)lysine.

The protein belongs to the class-III pyridoxal-phosphate-dependent aminotransferase family. HemL subfamily. In terms of assembly, homodimer. Requires pyridoxal 5'-phosphate as cofactor.

The protein localises to the cytoplasm. It carries out the reaction (S)-4-amino-5-oxopentanoate = 5-aminolevulinate. It participates in porphyrin-containing compound metabolism; protoporphyrin-IX biosynthesis; 5-aminolevulinate from L-glutamyl-tRNA(Glu): step 2/2. This chain is Glutamate-1-semialdehyde 2,1-aminomutase 1, found in Listeria innocua serovar 6a (strain ATCC BAA-680 / CLIP 11262).